Consider the following 1369-residue polypeptide: Rho guanine nucleotide exchange factor 10 (1369 aa).

A disordered region spans residues 1–106; sequence MRPPGFLSRA…ETTPVAEPTK (106 aa). Residues 46-64 are compositionally biased toward acidic residues; that stretch reads NNEEEEGEQFDFDSGDEIP. Low complexity predominate over residues 83 to 100; that stretch reads EAPAPTGGEDGAGAETTP. S180 carries the phosphoserine modification. The segment at 184-254 is disordered; sequence EAETPEVTED…ENSDSEPDEM (71 aa). Polar residues predominate over residues 196 to 209; the sequence is PNSLSSEEPPTSED. Residues 304-355 adopt a coiled-coil conformation; sequence KKQLSHDLTRLKEHYEKKMRDLMASTVGVVEIQQLRQKHELKMQKLVKAAKD. Position 379 is a phosphoserine (S379). Positions 421 to 608 constitute a DH domain; the sequence is VRRYILGSVV…ETLAEKLNER (188 aa). 2 disordered regions span residues 1226 to 1260 and 1277 to 1297; these read KDKS…LSQG and QKSD…SSSL. The segment covering 1279–1296 has biased composition (low complexity); it reads SDLSSSSGSLSLSHGSSS. A Phosphoserine modification is found at S1287. Q1338 carries the post-translational modification N5-methylglutamine.

In terms of processing, methylated at Gln-1338 by N6AMT1.

Its function is as follows. May play a role in developmental myelination of peripheral nerves. The chain is Rho guanine nucleotide exchange factor 10 (ARHGEF10) from Homo sapiens (Human).